The primary structure comprises 461 residues: Argininosuccinate lyase (461 aa).

2-(N(omega)-L-arginino)succinate contacts are provided by Ser28, Asn115, and Thr160. Residue His161 is the Proton acceptor of the active site. Ser282 acts as the Proton donor in catalysis. Residues Asn290, Tyr322, Gln327, and Lys330 each coordinate 2-(N(omega)-L-arginino)succinate.

Belongs to the lyase 1 family. Argininosuccinate lyase subfamily. As to quaternary structure, homotetramer.

The enzyme catalyses 2-(N(omega)-L-arginino)succinate = fumarate + L-arginine. Its pathway is amino-acid biosynthesis; L-arginine biosynthesis; L-arginine from L-ornithine and carbamoyl phosphate: step 3/3. The polypeptide is Argininosuccinate lyase (arg7) (Schizosaccharomyces pombe (strain 972 / ATCC 24843) (Fission yeast)).